The chain runs to 96 residues: NADH-ubiquinone oxidoreductase chain 4L (96 aa).

A run of 3 helical transmembrane segments spans residues 1–21 (MPTT…SLQR), 27–47 (LLLT…LWAL), and 57–77 (APLI…SLMI).

This sequence belongs to the complex I subunit 4L family.

It is found in the mitochondrion membrane. The catalysed reaction is a ubiquinone + NADH + 5 H(+)(in) = a ubiquinol + NAD(+) + 4 H(+)(out). In terms of biological role, core subunit of the mitochondrial membrane respiratory chain NADH dehydrogenase (Complex I) which catalyzes electron transfer from NADH through the respiratory chain, using ubiquinone as an electron acceptor. Part of the enzyme membrane arm which is embedded in the lipid bilayer and involved in proton translocation. This is NADH-ubiquinone oxidoreductase chain 4L (MT-ND4L) from Petromyzon marinus (Sea lamprey).